Reading from the N-terminus, the 523-residue chain is MANVGLQFQASAGDSDPQSRPLLLLGQLHHLHRVPWSHVRGKLQPRVTEELWQAALSTLNPNPTDSCPLYLNYATVAALPCRVSRHNSPSAAHFITRLVRTCLPPGAHRCIVMVCEQPEVFASACALARAFPLFTHRSGASRRLEKKTVTVEFFLVGQDNGPVEVSTLQCLANATDGVRLAARIVDTPCNEMNTDTFLEEINKVGKELGIIPTIIRDEELKTRGFGGIYGVGKAALHPPALAVLSHTPDGATQTIAWVGKGIVYDTGGLSIKGKTTMPGMKRDCGGAAAVLGAFRAAIKQGFKDNLHAVFCLAENSVGPNATRPDDIHLLYSGKTVEINNTDAEGRLVLADGVSYACKDLGADIILDMATLTGAQGIATGKYHAAVLTNSAEWEAACVKAGRKCGDLVHPLVYCPELHFSEFTSAVADMKNSVADRDNSPSSCAGLFIASHIGFDWPGVWVHLDIAAPVHAGERATGFGVALLLALFGRASEDPLLNLVSPLGCEVDVEEGDLGRDSKRRRLV.

The Zn(2+) site is built by Lys260 and Asp265. Lys272 is an active-site residue. Asp283, Asp342, and Glu344 together coordinate Zn(2+). Residue Arg346 is part of the active site.

The protein belongs to the peptidase M17 family. Requires Zn(2+) as cofactor. The cofactor is Mn(2+). Ubiquitously expressed.

Functionally, probably catalyzes the removal of unsubstituted N-terminal amino acids from various peptides. The polypeptide is Probable aminopeptidase NPEPL1 (NPEPL1) (Homo sapiens (Human)).